Reading from the N-terminus, the 354-residue chain is Uptake hydrogenase small subunit (354 aa).

A signal peptide (tat-type signal) is located at residues 1–44 (MSQLETXYDVMRRQGITRRSFLKYCSLTGRPCLGPTFAPQIAHA). [4Fe-4S] cluster-binding residues include cysteine 61, cysteine 64, cysteine 156, cysteine 190, histidine 228, serine 231, cysteine 256, and cysteine 262. [3Fe-4S] cluster-binding residues include cysteine 271, cysteine 290, and cysteine 293.

Belongs to the [NiFe]/[NiFeSe] hydrogenase small subunit family. In terms of assembly, heterodimer of a large and a small subunit. Requires [4Fe-4S] cluster as cofactor. [3Fe-4S] cluster serves as cofactor. Post-translationally, predicted to be exported by the Tat system. The position of the signal peptide cleavage has not been experimentally proven.

It is found in the cell membrane. The enzyme catalyses H2 + A = AH2. In terms of biological role, this enzyme recycles the H(2) produced by nitrogenase to increase the production of ATP and to protect nitrogenase against inhibition or damage by O(2) under carbon- or phosphate-limited conditions. This is Uptake hydrogenase small subunit (hupA) from Azotobacter chroococcum mcd 1.